The primary structure comprises 185 residues: NEDD8-conjugating enzyme UBE2F (185 aa).

Residues 1-29 (MLTLASKLKREEGVRAGRTPAGSNDAAHR) form an interaction with uba3 region. The UBC core domain maps to 32-185 (IRDRLLIKEV…VQDFIKNYAR (154 aa)). The active-site Glycyl thioester intermediate is the C116.

It belongs to the ubiquitin-conjugating enzyme family. UBE2F subfamily.

The enzyme catalyses [E1 NEDD8-activating enzyme]-S-[NEDD8 protein]-yl-L-cysteine + [E2 NEDD8-conjugating enzyme]-L-cysteine = [E1 NEDD8-activating enzyme]-L-cysteine + [E2 NEDD8-conjugating enzyme]-S-[NEDD8-protein]-yl-L-cysteine.. The protein operates within protein modification; protein neddylation. In terms of biological role, accepts the ubiquitin-like protein NEDD8 from the UBA3-NAE1 E1 complex and catalyzes its covalent attachment to other proteins. Together with the E3 ubiquitin ligase rnf7/rbx2, specifically neddylates cullin-5 (cul5). Does not neddylate cul1, cul2, cul3, cul4a or cul4b. The sequence is that of NEDD8-conjugating enzyme UBE2F (ube2f) from Danio rerio (Zebrafish).